We begin with the raw amino-acid sequence, 375 residues long: Growth/differentiation factor 8 (375 aa).

Residues 1–23 (MQKLAVYVYIYLFMLISVDPVAL) form the signal peptide. The propeptide occupies 24-266 (DDGSQPTENA…VTDTPKRSRR (243 aa)). Asn71 is a glycosylation site (N-linked (GlcNAc...) asparagine). Cystine bridges form between Cys272-Cys282, Cys281-Cys340, Cys309-Cys372, and Cys313-Cys374.

It belongs to the TGF-beta family. In terms of assembly, homodimer; disulfide-linked.

The protein localises to the secreted. In terms of biological role, acts specifically as a negative regulator of skeletal muscle growth. The protein is Growth/differentiation factor 8 (MSTN) of Anser anser anser (Western greylag goose).